The primary structure comprises 61 residues: uncharacterized protein (61 aa).

This is an uncharacterized protein from Staphylococcus epidermidis.